A 421-amino-acid chain; its full sequence is ATP-dependent RNA helicase RhlB (421 aa).

The short motif at 9-37 is the Q motif element; the sequence is QKFSDFALHPKVVEALEKKGFHNCTPIQA. The Helicase ATP-binding domain maps to 40–219; the sequence is LPLTLAGRDV…FEQMNNAEYI (180 aa). 53–60 serves as a coordination point for ATP; the sequence is AQTGTGKT. A DEAD box motif is present at residues 165–168; the sequence is DEAD. The region spanning 245–390 is the Helicase C-terminal domain; the sequence is RLLQTLIEEE…VSKYNPDALM (146 aa). The interval 392–421 is disordered; the sequence is DLPKPLRLTRPRTGNGPRRTGAPRNRRRSG. Residues 402–414 show a composition bias toward low complexity; it reads PRTGNGPRRTGAP.

The protein belongs to the DEAD box helicase family. RhlB subfamily. In terms of assembly, component of the RNA degradosome, which is a multiprotein complex involved in RNA processing and mRNA degradation.

The protein resides in the cytoplasm. It catalyses the reaction ATP + H2O = ADP + phosphate + H(+). In terms of biological role, DEAD-box RNA helicase involved in RNA degradation. Has RNA-dependent ATPase activity and unwinds double-stranded RNA. In Escherichia coli O139:H28 (strain E24377A / ETEC), this protein is ATP-dependent RNA helicase RhlB.